We begin with the raw amino-acid sequence, 201 residues long: Dermatopontin (201 aa).

Residues 1 to 18 form the signal peptide; sequence MDLTLLWVLLPLVTVAWG. Glutamine 19 is modified (pyrrolidone carboxylic acid). Residue tyrosine 23 is modified to Sulfotyrosine. 4 consecutive repeat copies span residues 26-79, 70-75, 80-135, and 125-130. The interval 26-135 is 2 X 53-55 AA tandem repeats; it reads SYHQYHDYSD…REWQFYCCRY (110 aa). Intrachain disulfides connect cysteine 50–cysteine 77, cysteine 90–cysteine 132, cysteine 106–cysteine 133, cysteine 139–cysteine 196, and cysteine 143–cysteine 189. The 3 X 6 AA tandem repeats of D-R-[EQ]-W-[NQK]-[FY] stretch occupies residues 70 to 186; the sequence is DRQWNYACMP…AVERDRQWKF (117 aa). Tyrosine 162, tyrosine 164, tyrosine 166, and tyrosine 167 each carry sulfotyrosine. A 2-3 repeat occupies 181-186; sequence DRQWKF. Tyrosine 194 is subject to Sulfotyrosine.

It belongs to the dermatopontin family. As to quaternary structure, interacts with TGFB1, DCN and collagen. In terms of processing, sulfated on tyrosine residue(s). Expressed in skeletal muscle, heart, pancreas, skin and cultured fibroblasts.

The protein resides in the secreted. The protein localises to the extracellular space. It is found in the extracellular matrix. Functionally, seems to mediate adhesion by cell surface integrin binding. May serve as a communication link between the dermal fibroblast cell surface and its extracellular matrix environment. Enhances TGFB1 activity. Inhibits cell proliferation. Accelerates collagen fibril formation, and stabilizes collagen fibrils against low-temperature dissociation. This Bos taurus (Bovine) protein is Dermatopontin (DPT).